Here is a 130-residue protein sequence, read N- to C-terminus: uncharacterized protein (130 aa).

The N-terminal stretch at Met-1 to Gly-26 is a signal peptide. Asn-88 is a glycosylation site (N-linked (GlcNAc...) asparagine).

It localises to the secreted. This is an uncharacterized protein from Dictyostelium discoideum (Social amoeba).